The primary structure comprises 333 residues: Na(+)-translocating ferredoxin:NAD(+) oxidoreductase complex subunit B (333 aa).

A hydrophobic region spans residues 1 to 27 (MLNAILVPVGILGVFGLIFGIGLAIAA). The 60-residue stretch at 33-92 (YEDPRVPLVRAALPGANCGGCGLPGCDALAANIVGGSAAIDACPVGGASCAAAVAEIMGM) folds into the 4Fe-4S domain. 28 residues coordinate [4Fe-4S] cluster: cysteine 50, cysteine 53, cysteine 58, cysteine 75, cysteine 138, cysteine 142, cysteine 148, cysteine 152, cysteine 172, cysteine 175, cysteine 178, cysteine 182, cysteine 217, cysteine 220, cysteine 223, cysteine 227, cysteine 246, cysteine 249, cysteine 252, cysteine 256, cysteine 279, cysteine 282, cysteine 285, cysteine 289, cysteine 310, cysteine 313, cysteine 316, and cysteine 320. 4Fe-4S ferredoxin-type domains are found at residues 126 to 162 (REAM…IGED), 163 to 192 (GLPK…LVPE), 207 to 237 (KIAR…VENN), 239 to 266 (AKID…GDVE), 270 to 299 (STAY…GEIK), and 301 to 330 (PPYV…MRPN).

Belongs to the 4Fe4S bacterial-type ferredoxin family. RnfB subfamily. In terms of assembly, the complex is composed of six subunits: RnfA, RnfB, RnfC, RnfD, RnfE and RnfG. [4Fe-4S] cluster serves as cofactor.

The protein resides in the cell membrane. The enzyme catalyses 2 reduced [2Fe-2S]-[ferredoxin] + Na(+)(in) + NAD(+) + H(+) = 2 oxidized [2Fe-2S]-[ferredoxin] + Na(+)(out) + NADH. Its function is as follows. Part of a membrane-bound complex that couples electron transfer with translocation of ions across the membrane. Couples electron transfer from reduced ferredoxin to NAD(+) with electrogenic movement of Na(+) out of the cell. Involved in caffeate respiration. In Acetobacterium woodii (strain ATCC 29683 / DSM 1030 / JCM 2381 / KCTC 1655 / WB1), this protein is Na(+)-translocating ferredoxin:NAD(+) oxidoreductase complex subunit B.